A 584-amino-acid chain; its full sequence is DNA ligase (584 aa).

ATP is bound at residue Glu249. The N6-AMP-lysine intermediate role is filled by Lys251. ATP contacts are provided by Arg256, Arg271, Glu301, Phe341, Arg416, and Lys422.

This sequence belongs to the ATP-dependent DNA ligase family. The cofactor is Mg(2+).

It catalyses the reaction ATP + (deoxyribonucleotide)n-3'-hydroxyl + 5'-phospho-(deoxyribonucleotide)m = (deoxyribonucleotide)n+m + AMP + diphosphate.. DNA ligase that seals nicks in double-stranded DNA during DNA replication, DNA recombination and DNA repair. The sequence is that of DNA ligase from Pyrobaculum arsenaticum (strain DSM 13514 / JCM 11321 / PZ6).